Reading from the N-terminus, the 70-residue chain is Putative membrane protein insertion efficiency factor (70 aa).

It belongs to the UPF0161 family.

The protein localises to the cell membrane. Functionally, could be involved in insertion of integral membrane proteins into the membrane. In Chloroflexus aurantiacus (strain ATCC 29366 / DSM 635 / J-10-fl), this protein is Putative membrane protein insertion efficiency factor.